Consider the following 387-residue polypeptide: Pepsin A (387 aa).

An N-terminal signal peptide occupies residues 1-16 (MKKLLLLLGLVALSEC). The propeptide at 17–61 (LYKVPLVKKKSLRQNLIENGLLKDFLAKHNVNPASKYFPTEAATE) is activation peptide. The Peptidase A1 domain maps to 75–384 (YFGTIGIGTP…DRGNNRVGLA (310 aa)). Asp-93 is a catalytic residue. Residues Cys-106 and Cys-111 are joined by a disulfide bond. Ser-129 bears the Phosphoserine mark. Cys-267 and Cys-271 are disulfide-bonded. Asp-276 is an active-site residue. An intrachain disulfide couples Cys-310 to Cys-343.

It belongs to the peptidase A1 family.

Its subcellular location is the secreted. The catalysed reaction is Preferential cleavage: hydrophobic, preferably aromatic, residues in P1 and P1' positions. Cleaves 1-Phe-|-Val-2, 4-Gln-|-His-5, 13-Glu-|-Ala-14, 14-Ala-|-Leu-15, 15-Leu-|-Tyr-16, 16-Tyr-|-Leu-17, 23-Gly-|-Phe-24, 24-Phe-|-Phe-25 and 25-Phe-|-Tyr-26 bonds in the B chain of insulin.. Shows particularly broad specificity; although bonds involving phenylalanine and leucine are preferred, many others are also cleaved to some extent. The polypeptide is Pepsin A (PGA) (Suncus murinus (Asian house shrew)).